A 138-amino-acid chain; its full sequence is MRTLWIVAVCLIGVEGSLLEFGMMILGETGKNPLTSYSFYGCYCGVGGKGTPKDATDRCCFVHDCCYGNLPDCSPKTDRYKYHRENGAIVCGKGTSCENRICECDRAAAICFRKNLKTYNYIYRNYPDFLCKKESEKC.

A signal peptide spans 1-16 (MRTLWIVAVCLIGVEG). 7 disulfide bridges follow: C42–C131, C44–C60, C59–C111, C65–C138, C66–C104, C73–C97, and C91–C102. Residues Y43, G45, and G47 each contribute to the Ca(2+) site. H63 is a catalytic residue. D64 contributes to the Ca(2+) binding site. D105 is a catalytic residue.

It belongs to the phospholipase A2 family. Group II subfamily. D49 sub-subfamily. As to quaternary structure, monomer. Binds to calmodulin, coagulation factor X (F10), M-type PLA2 receptor (R-180). May also bind to 14-3-3 proteins gamma (YWHAG) and epsilon (YWHAE), and R25, a mitochondrial membrane protein. Requires Ca(2+) as cofactor. As to expression, expressed by the venom gland.

The protein localises to the secreted. Its subcellular location is the host cytoplasm. It localises to the host cytosol. The enzyme catalyses a 1,2-diacyl-sn-glycero-3-phosphocholine + H2O = a 1-acyl-sn-glycero-3-phosphocholine + a fatty acid + H(+). In terms of biological role, snake venom phospholipase A2 (PLA2) that acts as a presynaptic neurotoxin, an inhibitor of blood coagulation, and has been found to bind with high affinity to intracellular proteins. The response of indirectly stimulated neuromuscular preparations to ammodytoxin (Atx) is triphasic. The first phase, the transient inhibition of the acetylcholine (ACh) release, starts soon after the addition of Atx and lasts for several minutes. This phase is probably independent of Atx enzymatic activity. The effect may be due to the specific binding of the toxin to presynaptic receptors. These receptors, called N-type receptors, are still unidentified. It is noteworthy that a neuronal isoform of the M-type PLA2 receptor (R180) has been identified as a high-affinity receptor for Atx in neuronal plasma membranes. It was demonstrated however that this receptor is not essential for expression of neurotoxicity by Atx. The second phase corresponds to an augmentation of neurotransmitter release. A peak is reached 10-20 minutes after exposure of the preparation to Atx and is followed by a gradual reduction. In this phase, the enzymatic activity of Atx of the mammalian is not significant. It is speculated that the increased release of neurotransmitter in this phase is induced by the interference of Atx with voltage-gated potassium channels. Measurements of ionic currents showed however that voltage-gated potassium channels are not affected by Atx. The third phase of the response of neuromuscular preparations to Atx, which corresponds to a complete and irreversible paralysis, is clearly dependent on the hydrolytic activity of the toxin. In addition to its presynaptic neurotoxicity, Atx shows an anticoagulant activity by binding with high affinity to activated coagulation factor X (F10) thus inhibiting the formation of the prothrombinase complex (FX/FV) and its activity (IC(50) is 20 nM). Surprisingly, Atx was discovered to bind intracellular proteins such as calmodulin (CaM) (IC(50) is 6 nM), 14-3-3 proteins gamma (YWHAG) and epsilon (YWHAE) (by similarity with AtxC), as well as R25 (by similarity with AtxC), a mitochondrial integral membrane protein found in cerebral cortex. These findings raised a doubt about the dogma of the exclusively extracellular action of PLA2s, defended by the potential instability of these molecules in the reducing environment of the eukaryotic cytosol coupled with their possible inability to act as enzymes in this cellular compartment, due to too low concentration of calcium ions. This hypothesis was challenged efficiently by demonstrating the internalization of AtxA into a culture cells, but still remains to be directly demonstrated in vivo. PLA2 catalyzes the calcium-dependent hydrolysis of the 2-acyl groups in 3-sn-phosphoglycerides. In Vipera ammodytes ammodytes (Western sand viper), this protein is Basic phospholipase A2 ammodytoxin A.